Reading from the N-terminus, the 373-residue chain is 4-hydroxy-3-methylbut-2-en-1-yl diphosphate synthase (flavodoxin) (373 aa).

Residues Cys270, Cys273, Cys305, and Glu312 each contribute to the [4Fe-4S] cluster site.

This sequence belongs to the IspG family. [4Fe-4S] cluster is required as a cofactor.

It carries out the reaction (2E)-4-hydroxy-3-methylbut-2-enyl diphosphate + oxidized [flavodoxin] + H2O + 2 H(+) = 2-C-methyl-D-erythritol 2,4-cyclic diphosphate + reduced [flavodoxin]. Its pathway is isoprenoid biosynthesis; isopentenyl diphosphate biosynthesis via DXP pathway; isopentenyl diphosphate from 1-deoxy-D-xylulose 5-phosphate: step 5/6. Functionally, converts 2C-methyl-D-erythritol 2,4-cyclodiphosphate (ME-2,4cPP) into 1-hydroxy-2-methyl-2-(E)-butenyl 4-diphosphate. The protein is 4-hydroxy-3-methylbut-2-en-1-yl diphosphate synthase (flavodoxin) of Pectobacterium atrosepticum (strain SCRI 1043 / ATCC BAA-672) (Erwinia carotovora subsp. atroseptica).